The primary structure comprises 1302 residues: Serine-enriched protein (1302 aa).

In terms of domain architecture, BTB spans 40–158 (CDVTFLVGDT…IHTGCVTLQP (119 aa)). 8 disordered regions span residues 325–532 (SIDP…RSPT), 575–624 (PIPP…SVMR), 648–685 (FTRAESGSSGGPLIRQSTFSASPAASSTAAKSAVQKQM), 701–752 (YAKM…SSDE), 834–858 (FTRRSESREPIEPRISEERESDSND), 1045–1090 (FQRS…RTEN), 1102–1163 (FSRA…GEEE), and 1187–1252 (VLTQ…SASP). Basic residues predominate over residues 337 to 364 (RQHHRHRHHHQSLPKIRKAKSQSFRTRR). Polar residues-rich tracts occupy residues 378-388 (LTLNTSLTSGN), 410-430 (SPGSSSQKTPTSLSRQGTLRA), 437-449 (SGQLSISLGTQGR), and 472-487 (GLRSPNDPMTSPTVRS). The segment covering 589–623 (KSAEREREAAEAAAREKEKEKEKEAAQPQEKKSVM) has biased composition (basic and acidic residues). Over residues 664 to 680 (STFSASPAASSTAAKSA) the composition is skewed to low complexity. Residues 713–723 (KRDDEEKEKQK) show a composition bias toward basic and acidic residues. A compositionally biased stretch (polar residues) spans 736-748 (DLSQTNADQQVGG). Residues 836-855 (RRSESREPIEPRISEERESD) show a composition bias toward basic and acidic residues. Low complexity-rich tracts occupy residues 1047 to 1056 (RSGSSCGGRK) and 1107 to 1128 (SPLSQQTSSNYSSRDSYDSSGS). Residues 1187-1207 (VLTQQLSTGSMSTPSGYTNGT) show a composition bias toward polar residues. Low complexity predominate over residues 1226–1252 (APLSSCGFSSGSEFEPPSPRRAASASP).

The sequence is that of Serine-enriched protein (gprs) from Drosophila melanogaster (Fruit fly).